The primary structure comprises 704 residues: Ribosomal RNA large subunit methyltransferase K/L (704 aa).

It belongs to the methyltransferase superfamily. RlmKL family.

It localises to the cytoplasm. The enzyme catalyses guanosine(2445) in 23S rRNA + S-adenosyl-L-methionine = N(2)-methylguanosine(2445) in 23S rRNA + S-adenosyl-L-homocysteine + H(+). It carries out the reaction guanosine(2069) in 23S rRNA + S-adenosyl-L-methionine = N(2)-methylguanosine(2069) in 23S rRNA + S-adenosyl-L-homocysteine + H(+). Specifically methylates the guanine in position 2445 (m2G2445) and the guanine in position 2069 (m7G2069) of 23S rRNA. This Alcanivorax borkumensis (strain ATCC 700651 / DSM 11573 / NCIMB 13689 / SK2) protein is Ribosomal RNA large subunit methyltransferase K/L.